The sequence spans 770 residues: Cyclopiane-type diterpene synthase (770 aa).

The terpene cyclase stretch occupies residues 5–335; that stretch reads ITDEYAVGID…VPRYCKVDRN (331 aa). Aspartate 97 and aspartate 101 together coordinate Mg(2+). Substrate is bound by residues aspartate 97, aspartate 101, 190–193, asparagine 234, 238–242, and 328–329; these read RIVD, SWDKE, and RY. The DDXXD 1 motif lies at 97–101; that stretch reads DDETD. The short motif at 234-242 is the NSE/DTE element; the sequence is NDLFSWDKE. The prenyltransferase stretch occupies residues 336 to 720; the sequence is PYKDHLEKYG…WALRLLIMKL (385 aa). The interval 371–397 is disordered; that stretch reads NQLKEPSSSTYKTHFSPLEPNPGPEQT. The segment covering 374 to 383 has biased composition (polar residues); sequence KEPSSSTYKT. Positions 423, 426, and 455 each coordinate isopentenyl diphosphate. Positions 462 and 466 each coordinate Mg(2+). Positions 462–466 match the DDXXD 2 motif; it reads DDIQD. Arginine 471 is a dimethylallyl diphosphate binding site. Residue arginine 472 coordinates isopentenyl diphosphate. Dimethylallyl diphosphate-binding residues include lysine 548, threonine 549, glutamine 584, asparagine 591, lysine 620, and lysine 630.

It in the N-terminal section; belongs to the terpene synthase family. In the C-terminal section; belongs to the FPP/GGPP synthase family. As to quaternary structure, hexamer. Mg(2+) serves as cofactor.

It catalyses the reaction isopentenyl diphosphate + (2E,6E)-farnesyl diphosphate = (2E,6E,10E)-geranylgeranyl diphosphate + diphosphate. The catalysed reaction is (2E,6E,10E)-geranylgeranyl diphosphate + H2O = (+)-penichrysol + diphosphate. The protein operates within secondary metabolite biosynthesis; terpenoid biosynthesis. Functionally, bifunctional terpene synthase converts dimethylallyl diphosphate (DMAPP) and isopentenyl diphosphate (IPP) into a cyclopiane-type diterpene. The C-terminal prenyltransferase (PT) domain of PcCS catalyzes formation of geranylgeranyl pyrophosphate (GGPP), whereas the N-terminal terpene cyclase (TC) domain catalyzes the cyclization of GGPP to the cyclopiane-type diterpene penichrysol. The polypeptide is Cyclopiane-type diterpene synthase (Penicillium chrysogenum (Penicillium notatum)).